The primary structure comprises 347 residues: Heme A synthase (347 aa).

8 helical membrane-spanning segments follow: residues 14–34 (VKIWLCICCIGILVMVFIGGI), 96–116 (FHRLLGRIVGLVFLIPFLYFM), 129–149 (FILIAFLILVQGVMGWYMVKS), 162–182 (LAMHLLLALAIFYLLWKHFLL), 199–219 (VFYIIISLITIQITCGALVAG), 260–280 (FIHEVIALLILIIVVITLLVL), 287–307 (MYLLLALLLIQLTLGILTFIY), and 311–331 (IILASLHQVTAFILFASSIYL). His262 contacts heme. His317 is a heme binding site.

Belongs to the COX15/CtaA family. Type 2 subfamily. Interacts with CtaB. Requires heme b as cofactor.

It localises to the cell membrane. The enzyme catalyses Fe(II)-heme o + 2 A + H2O = Fe(II)-heme a + 2 AH2. It functions in the pathway porphyrin-containing compound metabolism; heme A biosynthesis; heme A from heme O: step 1/1. Functionally, catalyzes the conversion of heme O to heme A by two successive hydroxylations of the methyl group at C8. The first hydroxylation forms heme I, the second hydroxylation results in an unstable dihydroxymethyl group, which spontaneously dehydrates, resulting in the formyl group of heme A. This chain is Heme A synthase, found in Ehrlichia ruminantium (strain Welgevonden).